A 320-amino-acid chain; its full sequence is o-succinylbenzoate synthase (320 aa).

The active-site Proton donor is K133. Mg(2+) is bound by residues D161, E190, and D213. K235 (proton acceptor) is an active-site residue.

It belongs to the mandelate racemase/muconate lactonizing enzyme family. MenC type 1 subfamily. A divalent metal cation is required as a cofactor.

It catalyses the reaction (1R,6R)-6-hydroxy-2-succinyl-cyclohexa-2,4-diene-1-carboxylate = 2-succinylbenzoate + H2O. It functions in the pathway quinol/quinone metabolism; 1,4-dihydroxy-2-naphthoate biosynthesis; 1,4-dihydroxy-2-naphthoate from chorismate: step 4/7. Its pathway is quinol/quinone metabolism; menaquinone biosynthesis. Converts 2-succinyl-6-hydroxy-2,4-cyclohexadiene-1-carboxylate (SHCHC) to 2-succinylbenzoate (OSB). The chain is o-succinylbenzoate synthase from Escherichia coli O7:K1 (strain IAI39 / ExPEC).